Consider the following 231-residue polypeptide: Probable septum site-determining protein MinC (231 aa).

The disordered stretch occupies residues 100 to 125; it reads EGKEKSPRPAPAPQAPAQNTTPVTKT.

The protein belongs to the MinC family. Interacts with MinD and FtsZ.

In terms of biological role, cell division inhibitor that blocks the formation of polar Z ring septums. Rapidly oscillates between the poles of the cell to destabilize FtsZ filaments that have formed before they mature into polar Z rings. Prevents FtsZ polymerization. This chain is Probable septum site-determining protein MinC, found in Escherichia coli O81 (strain ED1a).